The chain runs to 561 residues: Asparagine synthetase [glutamine-hydrolyzing] (561 aa).

Residue Cys-2 is the For GATase activity of the active site. The region spanning 2-191 (CGIWALFGSD…PGHYEVLDLK (190 aa)) is the Glutamine amidotransferase type-2 domain. L-glutamine-binding positions include 49-53 (RLAVV), 75-77 (NGE), and Asp-97. One can recognise an Asparagine synthetase domain in the interval 213–536 (HAACDTVGNL…PGRSSWLPHY (324 aa)). ATP-binding positions include Leu-256, Ile-288, and 363 to 364 (SG).

The catalysed reaction is L-aspartate + L-glutamine + ATP + H2O = L-asparagine + L-glutamate + AMP + diphosphate + H(+). It functions in the pathway amino-acid biosynthesis; L-asparagine biosynthesis; L-asparagine from L-aspartate (L-Gln route): step 1/1. The polypeptide is Asparagine synthetase [glutamine-hydrolyzing] (ASNS) (Gallus gallus (Chicken)).